Here is an 874-residue protein sequence, read N- to C-terminus: Cap-specific mRNA (nucleoside-2'-O-)-methyltransferase 1A (874 aa).

The segment covering 1 to 10 (MSERGDDDRT) has biased composition (basic and acidic residues). The tract at residues 1–64 (MSERGDDDRT…APPTKQKTKA (64 aa)) is disordered. A G-patch domain is found at 60 to 106 (QKTKAEEMMERMGYKAGEGLGKNKQGIQEPVALSTQRGKTGLGHEGA). Positions 211-440 (FFQNRAAMKT…ERYITCKGLR (230 aa)) constitute a RrmJ-type SAM-dependent 2'-O-MTase domain. S-adenosyl-L-methionine is bound by residues Gly-273 and Asp-354. Catalysis depends on Lys-394, which acts as the Proton acceptor. Residues 535–555 (PNKQRPRGGDRGSRNGNQERL) are disordered.

The catalysed reaction is a 5'-end (N(7)-methyl 5'-triphosphoguanosine)-ribonucleoside in mRNA + S-adenosyl-L-methionine = a 5'-end (N(7)-methyl 5'-triphosphoguanosine)-(2'-O-methyl-ribonucleoside) in mRNA + S-adenosyl-L-homocysteine + H(+). In terms of biological role, S-adenosyl-L-methionine-dependent methyltransferase that mediates mRNA cap1 2'-O-ribose methylation to the 5'-cap structure of mRNAs. Methylates the ribose of the first nucleotide of a m(7)GpppG-capped mRNA to produce m(7)GpppNmp (cap1). Cap1 modification is linked to higher levels of translation. The chain is Cap-specific mRNA (nucleoside-2'-O-)-methyltransferase 1A from Caenorhabditis briggsae.